Consider the following 490-residue polypeptide: Glucose-6-phosphate 1-dehydrogenase (490 aa).

NADP(+) contacts are provided by residues Arg-48, Asp-90–Ile-91, and Lys-145. Residues His-175, Lys-179, Glu-213, and Asp-232 each coordinate substrate. The active-site Proton acceptor is the His-237. Substrate is bound by residues Lys-340 and Lys-345.

This sequence belongs to the glucose-6-phosphate dehydrogenase family.

It carries out the reaction D-glucose 6-phosphate + NADP(+) = 6-phospho-D-glucono-1,5-lactone + NADPH + H(+). The protein operates within carbohydrate degradation; pentose phosphate pathway; D-ribulose 5-phosphate from D-glucose 6-phosphate (oxidative stage): step 1/3. Catalyzes the oxidation of glucose 6-phosphate to 6-phosphogluconolactone. In Buchnera aphidicola subsp. Baizongia pistaciae (strain Bp), this protein is Glucose-6-phosphate 1-dehydrogenase.